Here is a 205-residue protein sequence, read N- to C-terminus: Adenylyl-sulfate kinase (205 aa).

Gly-31–Ser-38 is an ATP binding site. Ser-105 (phosphoserine intermediate) is an active-site residue.

Belongs to the APS kinase family.

It carries out the reaction adenosine 5'-phosphosulfate + ATP = 3'-phosphoadenylyl sulfate + ADP + H(+). The protein operates within sulfur metabolism; hydrogen sulfide biosynthesis; sulfite from sulfate: step 2/3. In terms of biological role, catalyzes the synthesis of activated sulfate. This chain is Adenylyl-sulfate kinase, found in Shewanella baltica (strain OS223).